The primary structure comprises 338 residues: Malate dehydrogenase, mitochondrial (338 aa).

The N-terminal 24 residues, 1–24, are a transit peptide targeting the mitochondrion; the sequence is MLSALARPASAALRRSFSTSAQNN. NAD(+) is bound by residues 31-37 and Asp57; that span reads GASGGIG. O-linked (GlcNAc) serine glycosylation is present at Ser33. Lys78 and Lys91 each carry N6-acetyllysine; alternate. Lys78 and Lys91 each carry N6-succinyllysine; alternate. Residues Arg104 and Arg110 each contribute to the substrate site. NAD(+) contacts are provided by residues Asn117 and 140-142; that span reads IAN. Position 142 (Asn142) interacts with substrate. Lys165 carries the post-translational modification N6-acetyllysine. Substrate is bound at residue Arg176. Lys185 is modified (N6-acetyllysine; alternate). Lys185 bears the N6-succinyllysine; alternate mark. Residue His200 is the Proton acceptor of the active site. Lys203 carries the post-translational modification N6-succinyllysine. N6-acetyllysine; alternate occurs at positions 215 and 239. Lys215 and Lys239 each carry N6-succinyllysine; alternate. At Lys239 the chain carries N6-malonyllysine; alternate. Residue Ser246 is modified to Phosphoserine. Met251 lines the NAD(+) pocket. Residue Lys269 is modified to N6-succinyllysine. N6-acetyllysine; alternate occurs at positions 296, 301, 307, 314, and 324. N6-succinyllysine; alternate occurs at positions 296, 301, 307, 314, and 324. An N6-malonyllysine; alternate modification is found at Lys307. Ser326 carries the phosphoserine modification. N6-acetyllysine; alternate occurs at positions 328, 329, and 335. N6-succinyllysine; alternate is present on Lys328. An N6-malonyllysine; alternate modification is found at Lys329. N6-succinyllysine; alternate is present on Lys335.

Belongs to the LDH/MDH superfamily. MDH type 1 family. In terms of assembly, homodimer. Acetylation is enhanced by up to 67% after treatment either with trichostin A (TSA) or with nicotinamide (NAM) with the appearance of tri- and tetraacetylations. Glucose also increases acetylation by about 60%.

The protein localises to the mitochondrion matrix. The enzyme catalyses (S)-malate + NAD(+) = oxaloacetate + NADH + H(+). With respect to regulation, enzyme activity is enhanced by acetylation. This is Malate dehydrogenase, mitochondrial (MDH2) from Homo sapiens (Human).